An 856-amino-acid polypeptide reads, in one-letter code: Alanine/arginine aminopeptidase (856 aa).

Substrate contacts are provided by residues Glu132 and 264–268 (GAMEN). Zn(2+) is bound at residue His300. Residue Glu301 is the Proton acceptor of the active site. Residues His304 and Glu323 each coordinate Zn(2+).

The protein belongs to the peptidase M1 family. Requires Zn(2+) as cofactor.

Positive effector of glycogen accumulation. May be involved in nutrient-sensing. This chain is Alanine/arginine aminopeptidase (AAP1), found in Saccharomyces cerevisiae (strain ATCC 204508 / S288c) (Baker's yeast).